A 459-amino-acid polypeptide reads, in one-letter code: UDP-N-acetylmuramoylalanine--D-glutamate ligase (459 aa).

120–126 lines the ATP pocket; the sequence is GSNGKTT.

This sequence belongs to the MurCDEF family.

It localises to the cytoplasm. It catalyses the reaction UDP-N-acetyl-alpha-D-muramoyl-L-alanine + D-glutamate + ATP = UDP-N-acetyl-alpha-D-muramoyl-L-alanyl-D-glutamate + ADP + phosphate + H(+). It participates in cell wall biogenesis; peptidoglycan biosynthesis. Its function is as follows. Cell wall formation. Catalyzes the addition of glutamate to the nucleotide precursor UDP-N-acetylmuramoyl-L-alanine (UMA). The chain is UDP-N-acetylmuramoylalanine--D-glutamate ligase from Lactobacillus acidophilus (strain ATCC 700396 / NCK56 / N2 / NCFM).